Reading from the N-terminus, the 411-residue chain is Tyrosine--tRNA ligase (411 aa).

Tyr-34 provides a ligand contact to L-tyrosine. The 'HIGH' region signature appears at 39 to 48 (CTATSLHIGS). The L-tyrosine site is built by Tyr-171 and Gln-175. The short motif at 231–235 (KMGKT) is the 'KMSKS' region element. Lys-234 is a binding site for ATP. In terms of domain architecture, S4 RNA-binding spans 345–411 (ISAYELFHEA…GKKRHILVRV (67 aa)).

This sequence belongs to the class-I aminoacyl-tRNA synthetase family. TyrS type 1 subfamily. As to quaternary structure, homodimer.

It localises to the cytoplasm. It catalyses the reaction tRNA(Tyr) + L-tyrosine + ATP = L-tyrosyl-tRNA(Tyr) + AMP + diphosphate + H(+). Catalyzes the attachment of tyrosine to tRNA(Tyr) in a two-step reaction: tyrosine is first activated by ATP to form Tyr-AMP and then transferred to the acceptor end of tRNA(Tyr). The polypeptide is Tyrosine--tRNA ligase (Rickettsia africae (strain ESF-5)).